The sequence spans 294 residues: tRNA dimethylallyltransferase (294 aa).

An ATP-binding site is contributed by glycine 10–threonine 17. Residue threonine 12–threonine 17 participates in substrate binding. The segment at aspartate 35 to glutamine 38 is interaction with substrate tRNA.

The protein belongs to the IPP transferase family. As to quaternary structure, monomer. It depends on Mg(2+) as a cofactor.

It carries out the reaction adenosine(37) in tRNA + dimethylallyl diphosphate = N(6)-dimethylallyladenosine(37) in tRNA + diphosphate. Its function is as follows. Catalyzes the transfer of a dimethylallyl group onto the adenine at position 37 in tRNAs that read codons beginning with uridine, leading to the formation of N6-(dimethylallyl)adenosine (i(6)A). The sequence is that of tRNA dimethylallyltransferase from Streptococcus pneumoniae (strain Taiwan19F-14).